A 428-amino-acid polypeptide reads, in one-letter code: Lipoamide acyltransferase component of branched-chain alpha-keto acid dehydrogenase complex (428 aa).

Residues 3 to 78 form the Lipoyl-binding domain; that stretch reads THVIKMPDIG…AVGGELIRLE (76 aa). Position 44 is an N6-lipoyllysine (Lys-44). Residues 88–145 are disordered; that stretch reads SPAAATPAAPVAATPEKPKEAPVAAPKAAAEAPRALRDSEAPRQRRQPGERPLASPAV. Residues 89–120 show a composition bias toward low complexity; sequence PAAATPAAPVAATPEKPKEAPVAAPKAAAEAP. Basic and acidic residues predominate over residues 121 to 136; it reads RALRDSEAPRQRRQPG. The Peripheral subunit-binding (PSBD) domain occupies 140–177; that stretch reads LASPAVRQRARDLGIELQFVQGSGPAGRVLHEDLDAYL. Active-site residues include His-400 and Asp-404.

This sequence belongs to the 2-oxoacid dehydrogenase family. Forms a 24-polypeptide structural core with octahedral symmetry. It depends on (R)-lipoate as a cofactor.

It catalyses the reaction N(6)-[(R)-dihydrolipoyl]-L-lysyl-[protein] + 2-methylpropanoyl-CoA = N(6)-[(R)-S(8)-2-methylpropanoyldihydrolipoyl]-L-lysyl-[protein] + CoA. Functionally, the branched-chain alpha-keto dehydrogenase complex catalyzes the overall conversion of alpha-keto acids to acyl-CoA and CO(2). It contains multiple copies of three enzymatic components: branched-chain alpha-keto acid decarboxylase (E1), lipoamide acyltransferase (E2) and lipoamide dehydrogenase (E3). In Pseudomonas aeruginosa (strain ATCC 15692 / DSM 22644 / CIP 104116 / JCM 14847 / LMG 12228 / 1C / PRS 101 / PAO1), this protein is Lipoamide acyltransferase component of branched-chain alpha-keto acid dehydrogenase complex (bkdB).